The following is a 306-amino-acid chain: Replication termination factor 2 (306 aa).

The segment at 193–276 is disordered; the sequence is AKLEKKTKKP…RSIADSEESE (84 aa). A compositionally biased stretch (basic and acidic residues) spans 226 to 240; sequence GKPEEASLDSREKKT. Residues 243–255 are compositionally biased toward polar residues; it reads APKSTAMNESSSG. Residue Ser-287 is modified to Phosphoserine.

The protein belongs to the rtf2 family. Interacts with DDI2; probably also interacts with DDI1. Post-translationally, undergoes proteasomal degradation, via DDI1 and DDI2. Removal from stalled replisomes and degradation are required for genome stability.

It localises to the chromosome. Its function is as follows. Replication termination factor which is a component of the elongating replisome. Required for ATR pathway signaling upon DNA damage and has a positive activity during DNA replication. Might function to facilitate fork pausing at replication fork barriers like the rDNA. May be globally required to stimulate ATR signaling after the fork stalls or encounters a lesion. Interacts with nascent DNA. The chain is Replication termination factor 2 from Homo sapiens (Human).